Reading from the N-terminus, the 359-residue chain is UPF0283 membrane protein Atu1356 (359 aa).

The tract at residues 1-39 is disordered; that stretch reads MKAPTQNDPQTRRPAAFTLETEEAARPSATQKRAPRSFD. Helical transmembrane passes span 75 to 95 and 108 to 128; these read FGKL…GLWA and WLGY…LALV.

It belongs to the UPF0283 family.

It is found in the cell inner membrane. The polypeptide is UPF0283 membrane protein Atu1356 (Agrobacterium fabrum (strain C58 / ATCC 33970) (Agrobacterium tumefaciens (strain C58))).